Consider the following 90-residue polypeptide: uncharacterized protein (90 aa).

The helical transmembrane segment at 69–89 (LLYIFLGAMIVIIFLVIKNQL) threads the bilayer.

It belongs to the IIV-6 466R family.

It is found in the membrane. This is an uncharacterized protein from Invertebrate iridescent virus 6 (IIV-6).